A 294-amino-acid chain; its full sequence is DEP domain-containing protein 4 (294 aa).

In terms of domain architecture, DEP spans 71–162 (LQAQVEIKRR…SNISLYRFLG (92 aa)).

The sequence is that of DEP domain-containing protein 4 (DEPDC4) from Homo sapiens (Human).